A 591-amino-acid polypeptide reads, in one-letter code: Probable anion transporter 4, chloroplastic (591 aa).

The interval Met-1–Arg-38 is disordered. The N-terminal 76 residues, Met-1–Val-76, are a transit peptide targeting the chloroplast. Residues Ser-8–Pro-36 are compositionally biased toward polar residues. 11 helical membrane-spanning segments follow: residues Val-184–Ile-204, Val-220–Ile-240, Val-249–Ala-269, Ile-271–Met-291, Leu-313–Ile-333, Phe-336–Trp-356, Val-402–Trp-422, Leu-440–Ala-460, Lys-475–Val-495, Ala-531–Ala-551, and Val-565–Thr-585.

Belongs to the major facilitator superfamily. Sodium/anion cotransporter (TC 2.A.1.14) family.

The protein resides in the plastid. It localises to the chloroplast membrane. Probable anion transporter. This chain is Probable anion transporter 4, chloroplastic (PHT4;4), found in Oryza sativa subsp. japonica (Rice).